The following is a 276-amino-acid chain: Transport and Golgi organization protein 2 homolog (276 aa).

This sequence belongs to the Tango2 family.

The protein localises to the cytoplasm. It is found in the mitochondrion. The protein resides in the golgi apparatus. Functionally, may be involved in lipid homeostasis. This chain is Transport and Golgi organization protein 2 homolog (TANGO2), found in Homo sapiens (Human).